Here is a 331-residue protein sequence, read N- to C-terminus: HTH-type transcriptional regulator GntR (331 aa).

The HTH lacI-type domain maps to 6-60 (PVLQDVADRVGVTKMTVSRFLRNPEQVSVALRGKIAAALDELGYIPNRAPDILSN). The H-T-H motif DNA-binding region spans 8–27 (LQDVADRVGVTKMTVSRFLR).

Its pathway is carbohydrate acid metabolism; D-gluconate degradation [regulation]. Functionally, negative regulator for the gluconate utilization system GNT-I, the gntUKR operon. The protein is HTH-type transcriptional regulator GntR (gntR) of Escherichia coli O6:H1 (strain CFT073 / ATCC 700928 / UPEC).